A 588-amino-acid chain; its full sequence is Catechol oxidase B, chloroplastic (588 aa).

The transit peptide at 1–88 (SSSSTTTIPL…AANLAPLASA (88 aa)) directs the protein to the chloroplast. Cystine bridges form between Cys99-Cys115 and Cys114-Cys181. Residues His180, His198, His207, His329, His333, and His364 each coordinate Cu cation. A cross-link (2'-(S-cysteinyl)-histidine (Cys-His)) is located at residues 184 to 198 (CNGAYKVGGKELQVH).

It belongs to the tyrosinase family. Cu(2+) is required as a cofactor.

It localises to the plastid. The protein localises to the chloroplast thylakoid lumen. The enzyme catalyses 2 catechol + O2 = 2 1,2-benzoquinone + 2 H2O. Its function is as follows. Catalyzes the oxidation of mono- and o-diphenols to o-diquinones. The polypeptide is Catechol oxidase B, chloroplastic (Solanum tuberosum (Potato)).